We begin with the raw amino-acid sequence, 245 residues long: tRNA pseudouridine synthase A 2 (245 aa).

Asp-53 serves as the catalytic Nucleophile. A substrate-binding site is contributed by Tyr-111.

It belongs to the tRNA pseudouridine synthase TruA family. In terms of assembly, homodimer.

The enzyme catalyses uridine(38/39/40) in tRNA = pseudouridine(38/39/40) in tRNA. Functionally, formation of pseudouridine at positions 38, 39 and 40 in the anticodon stem and loop of transfer RNAs. This chain is tRNA pseudouridine synthase A 2, found in Bacillus cereus (strain ATCC 10987 / NRS 248).